The primary structure comprises 388 residues: bZIP transcription factor 1-D (388 aa).

4 disordered regions span residues 1–49 (MGSS…PIPP), 103–249 (FAPY…GPTT), 261–316 (TASS…RKQA), and 348–388 (ELLS…KDTN). Composition is skewed to low complexity over residues 23–33 (PPATSSTATPT) and 117–129 (AAGT…TAGG). The segment covering 169-179 (SGASANGTISQ) has biased composition (polar residues). The span at 180–193 (SGESGSESSSEGSE) shows a compositional bias: low complexity. Over residues 214 to 231 (RSSQNGVSPSPSQAQLKQ) the composition is skewed to polar residues. In terms of domain architecture, bZIP spans 293 to 356 (ELKRQKRKQS…DELLSKNSSL (64 aa)). The basic motif stretch occupies residues 295–314 (KRQKRKQSNRDSARRSRLRK). The segment covering 302–316 (SNRDSARRSRLRKQA) has biased composition (basic and acidic residues). Residues 321-356 (LAQRAEVLKQENASLKDEVSRIRKEYDELLSKNSSL) are leucine-zipper. 2 stretches are compositionally biased toward basic and acidic residues: residues 359-369 (NVGDKQHKTDE) and 375-388 (KLQH…KDTN).

The protein belongs to the bZIP family. In terms of tissue distribution, highly expressed in roots and at lower levels in stems and leaves.

It localises to the nucleus. Functionally, probable transcription factor that may be involved in responses to fungal pathogen infection and abiotic stresses. The sequence is that of bZIP transcription factor 1-D from Triticum aestivum (Wheat).